The sequence spans 614 residues: Probable LRR receptor-like serine/threonine-protein kinase At5g45780 (614 aa).

A signal peptide spans 1 to 26; the sequence is MEISLMKFLFLGIWVYYYSVLDSVSA. Residues 27–242 lie on the Extracellular side of the membrane; the sequence is MDSLLSPKGV…NSKHHSLVLS (216 aa). LRR repeat units lie at residues 104 to 126, 128 to 151, 152 to 174, and 176 to 197; these read HLHTLLLQNNQLTGPIPSELGQL, ELETLDLSGNRFSGEIPASLGFLT, HLNYLRLSRNLLSGQVPHLVAGL, and GLSFLDLSFNNLSGPTPNISAK. N-linked (GlcNAc...) asparagine glycosylation is found at Asn-186, Asn-193, and Asn-224. The helical transmembrane segment at 243-263 threads the bilayer; that stretch reads FAFGIVVAFIISLMFLFFWVL. Over 264-614 the chain is Cytoplasmic; it reads WHRSRLSRSH…IEAIELSGPR (351 aa). Thr-297 is subject to Phosphothreonine. The Protein kinase domain occupies 300-576; it reads FSPKNILGQG…QVLKVLEGLV (277 aa). 306-314 lines the ATP pocket; that stretch reads LGQGGFGMV. Position 323 is a phosphothreonine (Thr-323). Lys-328 provides a ligand contact to ATP. Ser-380 carries the phosphoserine modification. Asp-426 functions as the Proton acceptor in the catalytic mechanism. Phosphothreonine is present on residues Thr-459, Thr-460, and Thr-465. Tyr-473 carries the phosphotyrosine modification. Ser-475 is subject to Phosphoserine. Thr-476 is modified (phosphothreonine). Ser-480 is subject to Phosphoserine. The residue at position 555 (Thr-555) is a Phosphothreonine.

It belongs to the protein kinase superfamily. Ser/Thr protein kinase family.

It is found in the membrane. The enzyme catalyses L-seryl-[protein] + ATP = O-phospho-L-seryl-[protein] + ADP + H(+). It catalyses the reaction L-threonyl-[protein] + ATP = O-phospho-L-threonyl-[protein] + ADP + H(+). This Arabidopsis thaliana (Mouse-ear cress) protein is Probable LRR receptor-like serine/threonine-protein kinase At5g45780.